A 215-amino-acid chain; its full sequence is UPF0502 protein YceH (215 aa).

Belongs to the UPF0502 family.

In Salmonella paratyphi C (strain RKS4594), this protein is UPF0502 protein YceH.